The following is a 230-amino-acid chain: UPF0173 metal-dependent hydrolase Acid_3917 (230 aa).

It belongs to the UPF0173 family.

The sequence is that of UPF0173 metal-dependent hydrolase Acid_3917 from Solibacter usitatus (strain Ellin6076).